We begin with the raw amino-acid sequence, 95 residues long: Large ribosomal subunit protein eL31 (95 aa).

Belongs to the eukaryotic ribosomal protein eL31 family. As to quaternary structure, part of the 50S ribosomal subunit.

This chain is Large ribosomal subunit protein eL31, found in Pyrococcus furiosus (strain ATCC 43587 / DSM 3638 / JCM 8422 / Vc1).